Here is a 199-residue protein sequence, read N- to C-terminus: TATA-box-binding protein (199 aa).

A run of 2 repeats spans residues 10–86 (IENI…VKLL) and 101–177 (IQNI…YNQL).

The protein belongs to the TBP family.

In terms of biological role, general factor that plays a role in the activation of archaeal genes transcribed by RNA polymerase. Binds specifically to the TATA box promoter element which lies close to the position of transcription initiation. This is TATA-box-binding protein from Pyrobaculum aerophilum (strain ATCC 51768 / DSM 7523 / JCM 9630 / CIP 104966 / NBRC 100827 / IM2).